The chain runs to 517 residues: Crotonobetaine/carnitine--CoA ligase (517 aa).

The protein belongs to the ATP-dependent AMP-binding enzyme family.

It catalyses the reaction 4-(trimethylamino)butanoate + ATP + CoA = 4-(trimethylamino)butanoyl-CoA + AMP + diphosphate. The catalysed reaction is crotonobetaine + ATP + CoA = crotonobetainyl-CoA + AMP + diphosphate. The enzyme catalyses (R)-carnitine + ATP + CoA = (R)-carnitinyl-CoA + AMP + diphosphate. The protein operates within amine and polyamine metabolism; carnitine metabolism. Catalyzes the transfer of CoA to carnitine, generating the initial carnitinyl-CoA needed for the CaiB reaction cycle. Also has activity toward crotonobetaine and gamma-butyrobetaine. This Escherichia coli O139:H28 (strain E24377A / ETEC) protein is Crotonobetaine/carnitine--CoA ligase.